We begin with the raw amino-acid sequence, 123 residues long: MKHRIGRVEGEILRELTKILRKDIRDPRLNDVTITAVECTNDLSYATVYYSMLTDDPAKEKEVAEGLDKAKGMMRHLLGQTLTVYKVPELIFKRDTSVAYGSKIDKLINQVKKQDQERENKNK.

Belongs to the RbfA family. In terms of assembly, monomer. Binds 30S ribosomal subunits, but not 50S ribosomal subunits or 70S ribosomes.

It is found in the cytoplasm. Functionally, one of several proteins that assist in the late maturation steps of the functional core of the 30S ribosomal subunit. Associates with free 30S ribosomal subunits (but not with 30S subunits that are part of 70S ribosomes or polysomes). Required for efficient processing of 16S rRNA. May interact with the 5'-terminal helix region of 16S rRNA. The sequence is that of Ribosome-binding factor A from Lactobacillus johnsonii (strain CNCM I-12250 / La1 / NCC 533).